The primary structure comprises 292 residues: Ribosomal protein L11 methyltransferase (292 aa).

Positions 144, 165, 187, and 229 each coordinate S-adenosyl-L-methionine.

It belongs to the methyltransferase superfamily. PrmA family.

Its subcellular location is the cytoplasm. It catalyses the reaction L-lysyl-[protein] + 3 S-adenosyl-L-methionine = N(6),N(6),N(6)-trimethyl-L-lysyl-[protein] + 3 S-adenosyl-L-homocysteine + 3 H(+). In terms of biological role, methylates ribosomal protein L11. The sequence is that of Ribosomal protein L11 methyltransferase from Pseudomonas putida (strain W619).